Reading from the N-terminus, the 98-residue chain is Large ribosomal subunit protein uL23 (98 aa).

This sequence belongs to the universal ribosomal protein uL23 family. Part of the 50S ribosomal subunit. Contacts protein L29, and trigger factor when it is bound to the ribosome.

Its function is as follows. One of the early assembly proteins it binds 23S rRNA. One of the proteins that surrounds the polypeptide exit tunnel on the outside of the ribosome. Forms the main docking site for trigger factor binding to the ribosome. The polypeptide is Large ribosomal subunit protein uL23 (Borrelia garinii subsp. bavariensis (strain ATCC BAA-2496 / DSM 23469 / PBi) (Borreliella bavariensis)).